Consider the following 302-residue polypeptide: Myb-related protein Hv33 (302 aa).

HTH myb-type domains lie at 11-63 (QPKV…INYL) and 64-118 (RPDL…KKKL). 2 consecutive DNA-binding regions (H-T-H motif) follow at residues 39 to 63 (WSSV…INYL) and 91 to 114 (WSQI…NSCI). Residues 137–158 (ATAAAALPDAEEEDRKPLCPAV) form a disordered region.

Germinating seed and apical meristem of shoot and root.

It is found in the nucleus. Possible transcription activator in response to an external signal. May be involved in the regulation of flavonoid biosynthesis. In Hordeum vulgare (Barley), this protein is Myb-related protein Hv33 (MYB2).